A 591-amino-acid polypeptide reads, in one-letter code: Probable indole-3-acetic acid-amido synthetase GH3.11 (591 aa).

Belongs to the IAA-amido conjugating enzyme family. Expressed in etiolated and green seedlings, roots, callus and highly in flowers.

In terms of biological role, may catalyze the synthesis of indole-3-acetic acid (IAA)-amino acid conjugates, providing a mechanism for the plant to cope with the presence of excess auxin. The sequence is that of Probable indole-3-acetic acid-amido synthetase GH3.11 (GH3.11) from Oryza sativa subsp. japonica (Rice).